The chain runs to 137 residues: Small ribosomal subunit protein uS12 (137 aa).

Positions 1–57 (MPTINQLVRKPRKSKVEKSKSPALNVGYNSRKKVQTNVSSPQKRGVATRVGTMTPKK) are disordered. Position 102 is a 3-methylthioaspartic acid (D102).

Belongs to the universal ribosomal protein uS12 family. In terms of assembly, part of the 30S ribosomal subunit. Contacts proteins S8 and S17. May interact with IF1 in the 30S initiation complex.

In terms of biological role, with S4 and S5 plays an important role in translational accuracy. Interacts with and stabilizes bases of the 16S rRNA that are involved in tRNA selection in the A site and with the mRNA backbone. Located at the interface of the 30S and 50S subunits, it traverses the body of the 30S subunit contacting proteins on the other side and probably holding the rRNA structure together. The combined cluster of proteins S8, S12 and S17 appears to hold together the shoulder and platform of the 30S subunit. This is Small ribosomal subunit protein uS12 from Streptococcus suis (strain 98HAH33).